Here is a 275-residue protein sequence, read N- to C-terminus: NAD kinase (275 aa).

The active-site Proton acceptor is the aspartate 66. Residues 66–67 (DG), histidine 71, 135–136 (NE), lysine 146, arginine 163, aspartate 165, and 176–181 (TAYAMS) contribute to the NAD(+) site.

The protein belongs to the NAD kinase family. A divalent metal cation serves as cofactor.

It localises to the cytoplasm. It catalyses the reaction NAD(+) + ATP = ADP + NADP(+) + H(+). Involved in the regulation of the intracellular balance of NAD and NADP, and is a key enzyme in the biosynthesis of NADP. Catalyzes specifically the phosphorylation on 2'-hydroxyl of the adenosine moiety of NAD to yield NADP. The sequence is that of NAD kinase from Methanosphaera stadtmanae (strain ATCC 43021 / DSM 3091 / JCM 11832 / MCB-3).